The following is a 767-amino-acid chain: Protein hunchback (767 aa).

Disordered regions lie at residues 30 to 51 (EPGHHLDGNSVASSPRQSPIPS), 105 to 127 (QQQYQQHFQAAQQQHHHHHHLMG), and 174 to 212 (EKLQALTPPMDVTPPKSPAKSSQSNIEPEKEHDQMSNSS). A compositionally biased stretch (polar residues) spans 39–51 (SVASSPRQSPIPS). Low complexity predominate over residues 105 to 117 (QQQYQQHFQAAQQ). Residues 200-212 (EPEKEHDQMSNSS) are compositionally biased toward basic and acidic residues. 4 C2H2-type zinc fingers span residues 242–264 (YKCKTCGVVAITKVDFWAHTRTH), 271–293 (LQCPKCPFVTEFKHHLEYHIRKH), 299–321 (FQCDKCSYTCVNKSMLNSHRKSH), and 327–351 (YRCADCDYATKYCHSFKLHLRKYGH). 3 disordered regions span residues 357–424 (LDED…TSQL), 518–570 (QLQQ…QPQQ), and 610–704 (GVMT…APPS). The span at 386–397 (IASGGSGSGSGS) shows a compositional bias: gly residues. The span at 518–527 (QLQQQNQQQS) shows a compositional bias: low complexity. Positions 528 to 537 (DNEEEEQDDE) are enriched in acidic residues. Positions 661–704 (ANTSASSTASSSGNSSNASSNSNGNSSSNSSSSGTNSAAAAPPS) are enriched in low complexity. C2H2-type zinc fingers lie at residues 714-736 (YECKYCDIFFKDAVLYTIHMGYH) and 742-766 (FKCNMCGEKCDGPVGLFVHMARNAH).

It belongs to the hunchback C2H2-type zinc-finger protein family.

It is found in the nucleus. Functionally, gap class segmentation protein that controls development of head structures. The sequence is that of Protein hunchback (hb) from Drosophila orena (Fruit fly).